Reading from the N-terminus, the 497-residue chain is Cytochrome P450 26A1 (497 aa).

Cysteine 442 contacts heme.

This sequence belongs to the cytochrome P450 family. Heme is required as a cofactor.

It localises to the endoplasmic reticulum membrane. Its subcellular location is the microsome membrane. It catalyses the reaction all-trans-retinoate + reduced [NADPH--hemoprotein reductase] + O2 = all-trans-(4S)-hydroxyretinoate + oxidized [NADPH--hemoprotein reductase] + H2O + H(+). It carries out the reaction all-trans-(4S)-hydroxyretinoate + reduced [NADPH--hemoprotein reductase] + O2 = all-trans-(4S,16)-dihydroxyretinoate + oxidized [NADPH--hemoprotein reductase] + H2O + H(+). The enzyme catalyses all-trans-retinoate + reduced [NADPH--hemoprotein reductase] + O2 = all-trans-18-hydroxyretinoate + oxidized [NADPH--hemoprotein reductase] + H2O + H(+). A cytochrome P450 monooxygenase involved in the metabolism of retinoates (RAs), the active metabolites of vitamin A, and critical signaling molecules in animals. RAs exist as at least four different isomers: all-trans-RA (atRA), 9-cis-RA, 13-cis-RA, and 9,13-dicis-RA, where atRA is considered to be the biologically active isomer, although 9-cis-RA and 13-cis-RA also have activity. Catalyzes the hydroxylation of atRA primarily at C-4 and C-18, thereby contributing to the regulation of atRA homeostasis and signaling. Hydroxylation of atRA limits its biological activity and initiates a degradative process leading to its eventual elimination. Involved in the convertion of atRA to all-trans-4-oxo-RA. Able to metabolize other RAs such as 9-cis, 13-cis and 9,13-di-cis RA. Can oxidize all-trans-13,14-dihydroretinoate (DRA) to metabolites which could include all-trans-4-oxo-DRA, all-trans-4-hydroxy-DRA, all-trans-5,8-epoxy-DRA, and all-trans-18-hydroxy-DRA. May play a role in the oxidative metabolism of xenobiotics such as tazarotenic acid. The protein is Cytochrome P450 26A1 of Mus musculus (Mouse).